The primary structure comprises 349 residues: Hydroxymethylglutaryl-CoA synthase (349 aa).

Residues D30 and A31 each coordinate (3S)-3-hydroxy-3-methylglutaryl-CoA. E82 serves as the catalytic Proton donor/acceptor. Residues C114 and T155 each contribute to the (3S)-3-hydroxy-3-methylglutaryl-CoA site. Catalysis depends on C114, which acts as the Acyl-thioester intermediate. R203 contributes to the CoA binding site. Positions 205 and 238 each coordinate (3S)-3-hydroxy-3-methylglutaryl-CoA. The active-site Proton donor/acceptor is the H238. K243 contacts CoA. Positions 270 and 300 each coordinate (3S)-3-hydroxy-3-methylglutaryl-CoA.

This sequence belongs to the thiolase-like superfamily. Archaeal HMG-CoA synthase family. Interacts with acetoacetyl-CoA thiolase that catalyzes the precedent step in the pathway and with a DUF35 protein. The acetoacetyl-CoA thiolase/HMG-CoA synthase complex channels the intermediate via a fused CoA-binding site, which allows for efficient coupling of the endergonic thiolase reaction with the exergonic HMGCS reaction.

It catalyses the reaction acetoacetyl-CoA + acetyl-CoA + H2O = (3S)-3-hydroxy-3-methylglutaryl-CoA + CoA + H(+). The protein operates within metabolic intermediate biosynthesis; (R)-mevalonate biosynthesis; (R)-mevalonate from acetyl-CoA: step 2/3. Functionally, catalyzes the condensation of acetyl-CoA with acetoacetyl-CoA to form 3-hydroxy-3-methylglutaryl-CoA (HMG-CoA). Functions in the mevalonate (MVA) pathway leading to isopentenyl diphosphate (IPP), a key precursor for the biosynthesis of isoprenoid compounds that are building blocks of archaeal membrane lipids. In Methanococcus maripaludis (strain DSM 14266 / JCM 13030 / NBRC 101832 / S2 / LL), this protein is Hydroxymethylglutaryl-CoA synthase.